The primary structure comprises 438 residues: Putative hydrolase MSMEG_3995/MSMEI_3903 (438 aa).

Residues D95, D104, E143, and H208 each contribute to the Zn(2+) site. Residue K217 forms an Isoglutamyl lysine isopeptide (Lys-Gln) (interchain with Q-Cter in protein Pup) linkage. H400 contributes to the Zn(2+) binding site.

This sequence belongs to the peptidase M20 family. Zn(2+) serves as cofactor.

The polypeptide is Putative hydrolase MSMEG_3995/MSMEI_3903 (Mycolicibacterium smegmatis (strain ATCC 700084 / mc(2)155) (Mycobacterium smegmatis)).